A 118-amino-acid polypeptide reads, in one-letter code: V-type proton ATPase subunit G 1 (118 aa).

Position 2 is an N-acetylalanine (alanine 2).

It belongs to the V-ATPase G subunit family. In terms of assembly, V-ATPase is a heteromultimeric enzyme made up of two complexes: the ATP-hydrolytic V1 complex and the proton translocation V0 complex. The V1 complex consists of three catalytic AB heterodimers that form a heterohexamer, three peripheral stalks each consisting of EG heterodimers, one central rotor including subunits D and F, and the regulatory subunits C and H. The proton translocation complex V0 consists of the proton transport subunit a, a ring of proteolipid subunits c9c'', rotary subunit d, subunits e and f, and the accessory subunits ATP6AP1/Ac45 and ATP6AP2/PRR. As to expression, kidney; localizes to early distal nephron, encompassing thick ascending limbs and distal convoluted tubules (at protein level). Ubiquitous.

The protein localises to the apical cell membrane. Subunit of the V1 complex of vacuolar(H+)-ATPase (V-ATPase), a multisubunit enzyme composed of a peripheral complex (V1) that hydrolyzes ATP and a membrane integral complex (V0) that translocates protons. V-ATPase is responsible for acidifying and maintaining the pH of intracellular compartments and in some cell types, is targeted to the plasma membrane, where it is responsible for acidifying the extracellular environment. In aerobic conditions, involved in intracellular iron homeostasis, thus triggering the activity of Fe(2+) prolyl hydroxylase (PHD) enzymes, and leading to HIF1A hydroxylation and subsequent proteasomal degradation. The polypeptide is V-type proton ATPase subunit G 1 (Atp6v1g1) (Mus musculus (Mouse)).